A 242-amino-acid polypeptide reads, in one-letter code: Lactate utilization protein A 2 (242 aa).

This sequence belongs to the LutA/YkgE family.

In terms of biological role, is involved in L-lactate degradation and allows cells to grow with lactate as the sole carbon source. The protein is Lactate utilization protein A 2 of Bacillus cereus (strain 03BB102).